We begin with the raw amino-acid sequence, 533 residues long: Protein trichome birefringence-like 18 (533 aa).

The helical; Signal-anchor for type II membrane protein transmembrane segment at 21-41 threads the bilayer; sequence VSTVAIAIGGLASFFVFGLLL. The disordered stretch occupies residues 93 to 171; sequence SDSSSGLPVV…PDDVSETASA (79 aa). Basic and acidic residues predominate over residues 113 to 154; that stretch reads SSDRKLETPLTQEKEDLVSSDITEKTDVQSGERETNVSKAED. A GDS motif motif is present at residues 248 to 250; that stretch reads GDS. The interval 475 to 502 is disordered; sequence HDGHPGPFRSPDPNKITKRGPDGRPPPQ. A DCXHWCLPGXXDXWN motif motif is present at residues 503–517; it reads DCLHWCMPGPVDTWN.

Belongs to the PC-esterase family. TBL subfamily.

It localises to the membrane. Its function is as follows. May act as a bridging protein that binds pectin and other cell wall polysaccharides. Probably involved in maintaining esterification of pectins. May be involved in the specific O-acetylation of cell wall polymers. The polypeptide is Protein trichome birefringence-like 18 (TBL18) (Arabidopsis thaliana (Mouse-ear cress)).